Consider the following 211-residue polypeptide: Nucleoside diphosphate kinase homolog 5 (211 aa).

Residues 13–145 are NDK; it reads EKTLALIKPD…EREIRFMFPA (133 aa).

This sequence belongs to the NDK family. As to quaternary structure, component of the axonemal radial spoke complex 1 (RS1), at least composed of spoke head proteins RSPH1, RSPH3, RSPH9 and the cilia-specific component RSPH4A or sperm-specific component RSPH6A, spoke stalk proteins RSPH14, DNAJB13, DYDC1, ROPN1L and NME5, and the anchor protein IQUB. Interacts with IQUB. As to expression, expressed in the trachea, ependymal cells and oviduct (at protein level). Expressed predominantly in germ cells of the testis. Not expressed in testicular somatic cells.

The protein resides in the cell projection. The protein localises to the cilium. Its subcellular location is the cytoplasm. It localises to the cytoskeleton. It is found in the flagellum axoneme. In terms of biological role, functions as part of axonemal radial spoke complexes that play an important part in the motility of sperm and cilia. Does not seem to have nucleoside diphosphate kinase (NDPK) activity. Confers protection from cell death by BAX and alters the cellular levels of several antioxidant enzymes including GPX5. May play a role in spermiogenesis by increasing the ability of late-stage spermatids to eliminate reactive oxygen species. In Mus musculus (Mouse), this protein is Nucleoside diphosphate kinase homolog 5 (Nme5).